The sequence spans 562 residues: Probable sesquiterpene synthase (562 aa).

Residues Asp-315, Asp-319, and Glu-467 each coordinate Mg(2+). The DDXXD motif motif lies at 315-319 (DDIYD).

The protein belongs to the terpene synthase family. Tpsa subfamily. Mg(2+) is required as a cofactor. It depends on Mn(2+) as a cofactor.

Its function is as follows. Sesquiterpene synthase. This is Probable sesquiterpene synthase (STPS) from Santalum murrayanum (Bitter quandong).